The sequence spans 368 residues: MSHNTFGHLFRVTTFGESHGVAIGCVVDGCPPMLPLTAEEIQRDLDRRRPGQSRFTTQRQEPDAVKILSGVMPHPGTGEQVTTGAPIGLLIENTDQRSKDYSDIKDKFRPGHADFTYEAKYGIRDYRGGGRSSARETAMRVAAGAIARKVVSGMRVRGALVQMGPHKIDRDKWDWDEIARNPFFCPDKDKAAFFESYLDGIRKSGSSIGAVIEVVADGVPAGLGAPIYAKLDGDLAAALMSINAVKGVEIGAGFGAAALTGEENADEMRSSSSDMGNHGPVFTSNHAGGILGGISTGQPIVARFAVKPTSSILSPRKTVDRNGAETDIFTRGRHDPCVGIRAVPVGEAMVACVLADHVLRHRGQVGAS.

The NADP(+) site is built by arginine 48 and arginine 54. FMN-binding positions include 131-133 (RSS), 243-244 (NA), glycine 292, 307-311 (KPTSS), and arginine 333.

The protein belongs to the chorismate synthase family. Homotetramer. FMNH2 is required as a cofactor.

It catalyses the reaction 5-O-(1-carboxyvinyl)-3-phosphoshikimate = chorismate + phosphate. The protein operates within metabolic intermediate biosynthesis; chorismate biosynthesis; chorismate from D-erythrose 4-phosphate and phosphoenolpyruvate: step 7/7. Functionally, catalyzes the anti-1,4-elimination of the C-3 phosphate and the C-6 proR hydrogen from 5-enolpyruvylshikimate-3-phosphate (EPSP) to yield chorismate, which is the branch point compound that serves as the starting substrate for the three terminal pathways of aromatic amino acid biosynthesis. This reaction introduces a second double bond into the aromatic ring system. The chain is Chorismate synthase from Nitrobacter winogradskyi (strain ATCC 25391 / DSM 10237 / CIP 104748 / NCIMB 11846 / Nb-255).